The following is a 92-amino-acid chain: Small ribosomal subunit protein uS19 (92 aa).

Belongs to the universal ribosomal protein uS19 family.

Protein S19 forms a complex with S13 that binds strongly to the 16S ribosomal RNA. The protein is Small ribosomal subunit protein uS19 of Picosynechococcus sp. (strain ATCC 27264 / PCC 7002 / PR-6) (Agmenellum quadruplicatum).